Consider the following 317-residue polypeptide: Aspartate carbamoyltransferase catalytic subunit (317 aa).

2 residues coordinate carbamoyl phosphate: R66 and T67. K94 contacts L-aspartate. Residues R116, H144, and Q147 each contribute to the carbamoyl phosphate site. The L-aspartate site is built by R177 and R231. Residues G272 and P273 each contribute to the carbamoyl phosphate site.

This sequence belongs to the aspartate/ornithine carbamoyltransferase superfamily. ATCase family. As to quaternary structure, heterododecamer (2C3:3R2) of six catalytic PyrB chains organized as two trimers (C3), and six regulatory PyrI chains organized as three dimers (R2).

It catalyses the reaction carbamoyl phosphate + L-aspartate = N-carbamoyl-L-aspartate + phosphate + H(+). Its pathway is pyrimidine metabolism; UMP biosynthesis via de novo pathway; (S)-dihydroorotate from bicarbonate: step 2/3. Functionally, catalyzes the condensation of carbamoyl phosphate and aspartate to form carbamoyl aspartate and inorganic phosphate, the committed step in the de novo pyrimidine nucleotide biosynthesis pathway. This is Aspartate carbamoyltransferase catalytic subunit from Nitrobacter winogradskyi (strain ATCC 25391 / DSM 10237 / CIP 104748 / NCIMB 11846 / Nb-255).